The primary structure comprises 373 residues: 3-isopropylmalate dehydrogenase (373 aa).

82 to 93 (GPKWGTGALRPE) contacts NAD(+). Substrate-binding residues include Arg-100, Arg-110, Arg-139, and Asp-231. The Mg(2+) site is built by Asp-231, Asp-256, and Asp-260. 295 to 306 (GSAPDLPANKVN) serves as a coordination point for NAD(+).

Belongs to the isocitrate and isopropylmalate dehydrogenases family. As to quaternary structure, homodimer. Requires Mg(2+) as cofactor. It depends on Mn(2+) as a cofactor.

It localises to the cytoplasm. The catalysed reaction is (2R,3S)-3-isopropylmalate + NAD(+) = 4-methyl-2-oxopentanoate + CO2 + NADH. It functions in the pathway amino-acid biosynthesis; L-leucine biosynthesis; L-leucine from 3-methyl-2-oxobutanoate: step 3/4. Functionally, catalyzes the oxidation of 3-carboxy-2-hydroxy-4-methylpentanoate (3-isopropylmalate) to 3-carboxy-4-methyl-2-oxopentanoate. The product decarboxylates to 4-methyl-2 oxopentanoate. The chain is 3-isopropylmalate dehydrogenase (LEU2) from Candida maltosa (Yeast).